Consider the following 434-residue polypeptide: Nicotinate phosphoribosyltransferase (434 aa).

Histidine 242 bears the Phosphohistidine; by autocatalysis mark.

It belongs to the NAPRTase family. Post-translationally, transiently phosphorylated on a His residue during the reaction cycle. Phosphorylation strongly increases the affinity for substrates and increases the rate of nicotinate D-ribonucleotide production. Dephosphorylation regenerates the low-affinity form of the enzyme, leading to product release.

It catalyses the reaction nicotinate + 5-phospho-alpha-D-ribose 1-diphosphate + ATP + H2O = nicotinate beta-D-ribonucleotide + ADP + phosphate + diphosphate. It functions in the pathway cofactor biosynthesis; NAD(+) biosynthesis; nicotinate D-ribonucleotide from nicotinate: step 1/1. In terms of biological role, catalyzes the synthesis of beta-nicotinate D-ribonucleotide from nicotinate and 5-phospho-D-ribose 1-phosphate at the expense of ATP. The chain is Nicotinate phosphoribosyltransferase from Sinorhizobium fredii (strain NBRC 101917 / NGR234).